Reading from the N-terminus, the 208-residue chain is FMN-dependent NADH:quinone oxidoreductase (208 aa).

Residue 99–102 participates in FMN binding; sequence MWNF.

Belongs to the azoreductase type 1 family. In terms of assembly, homodimer. FMN is required as a cofactor.

The enzyme catalyses 2 a quinone + NADH + H(+) = 2 a 1,4-benzosemiquinone + NAD(+). It carries out the reaction N,N-dimethyl-1,4-phenylenediamine + anthranilate + 2 NAD(+) = 2-(4-dimethylaminophenyl)diazenylbenzoate + 2 NADH + 2 H(+). Quinone reductase that provides resistance to thiol-specific stress caused by electrophilic quinones. Its function is as follows. Also exhibits azoreductase activity. Catalyzes the reductive cleavage of the azo bond in aromatic azo compounds to the corresponding amines. This is FMN-dependent NADH:quinone oxidoreductase from Brevibacillus brevis (strain 47 / JCM 6285 / NBRC 100599).